Consider the following 278-residue polypeptide: Aquaporin NIP3-3 (278 aa).

The next 2 membrane-spanning stretches (helical) occupy residues 70–90 (VSAE…TIIM) and 99–119 (TLLG…LSLI). Residues 127 to 129 (NPA) carry the NPA 1 motif. Transmembrane regions (helical) follow at residues 141 to 163 (PSAH…SFAV), 185 to 205 (AFFV…ALAT), and 213 to 233 (LIAV…GPST). An NPA 2 motif is present at residues 238–240 (NPA). Residues 255-275 (IWVYLVATPLGAIAGTGAYVA) form a helical membrane-spanning segment.

This sequence belongs to the MIP/aquaporin (TC 1.A.8) family. NIP (TC 1.A.8.12) subfamily. As to expression, expressed in leaves and at lower levels in roots and anthers.

The protein resides in the membrane. In terms of biological role, aquaporins facilitate the transport of water and small neutral solutes across cell membranes. This chain is Aquaporin NIP3-3 (NIP3-3), found in Oryza sativa subsp. japonica (Rice).